Consider the following 423-residue polypeptide: Peroxisome biogenesis factor 2 (423 aa).

Residues 1-26 (MVDNYNNNNILPTNTSTTTTTNTTIT) are compositionally biased toward low complexity. Residues 1 to 46 (MVDNYNNNNILPTNTSTTTTTNTTITPTPPLPPPPPISNILDNNNN) are disordered. At 1–109 (MVDNYNNNNI…NIKRPSTSIV (109 aa)) the chain is on the peroxisomal matrix side. Residues 27–37 (PTPPLPPPPPI) are compositionally biased toward pro residues. A helical transmembrane segment spans residues 110-136 (RVSQLDSARLDEEILDLLRSQFMKIFT). Over 137–142 (FFKPNF) the chain is Cytoplasmic. The chain crosses the membrane as a helical span at residues 143–168 (IHNFQPEINLVLKSVIYKLSIFNLGT). Residues 169 to 197 (TYGNQLQNLTYRNEKAFDPIRGSDQLNKL) lie on the Peroxisomal matrix side of the membrane. Residues 198–224 (TMRQKWLSGLINIGGEWLWTRINRYLI) form a helical membrane-spanning segment. Topologically, residues 225 to 234 (NNNWSEHPPN) are cytoplasmic. The helical transmembrane segment at 235 to 265 (DIRKKFWNFLNFAESAYKALALLNFLTFLFN) threads the bilayer. At 266 to 292 (GKYVTLVNRILHMRLVYAHPTLSRNIS) the chain is on the peroxisomal matrix side. Residues 293–316 (FEYMNRLLVWHGFTEFILFIMPLI) traverse the membrane as a helical segment. Topologically, residues 317-423 (NIDRIKSFLY…SNIKRFSIQD (107 aa)) are cytoplasmic. 8 residues coordinate Zn(2+): Cys369, Cys372, Cys385, His387, Cys390, Cys393, Cys406, and Cys409. The RING-type zinc finger occupies 369–410 (CPICMNDPISMPYSADCGHLFCYYCIKTSCMIDSSFTCPRCN).

Belongs to the pex2/pex10/pex12 family. As to quaternary structure, component of the PEX2-PEX10-PEX12 retrotranslocation channel.

It is found in the peroxisome membrane. The enzyme catalyses [E2 ubiquitin-conjugating enzyme]-S-ubiquitinyl-L-cysteine + [acceptor protein]-L-cysteine = [E2 ubiquitin-conjugating enzyme]-L-cysteine + [acceptor protein]-S-ubiquitinyl-L-cysteine.. It participates in protein modification; protein ubiquitination. Functionally, E3 ubiquitin-protein ligase component of a retrotranslocation channel required for peroxisome organization by mediating export of the PEX5 receptor from peroxisomes to the cytosol, thereby promoting PEX5 recycling. The retrotranslocation channel is composed of PEX2, PEX10 and PEX12; each subunit contributing transmembrane segments that coassemble into an open channel that specifically allows the passage of PEX5 through the peroxisomal membrane. PEX2 also regulates peroxisome organization by acting as a E3 ubiquitin-protein ligase. PEX2 ubiquitinates PEX5 during its passage through the retrotranslocation channel: catalyzes monoubiquitination of PEX5 at 'Cys-11', a modification that acts as a signal for PEX5 extraction into the cytosol. In Dictyostelium discoideum (Social amoeba), this protein is Peroxisome biogenesis factor 2 (pex2).